The following is a 263-amino-acid chain: Indole-3-glycerol phosphate synthase (263 aa).

This sequence belongs to the TrpC family.

It catalyses the reaction 1-(2-carboxyphenylamino)-1-deoxy-D-ribulose 5-phosphate + H(+) = (1S,2R)-1-C-(indol-3-yl)glycerol 3-phosphate + CO2 + H2O. It participates in amino-acid biosynthesis; L-tryptophan biosynthesis; L-tryptophan from chorismate: step 4/5. This is Indole-3-glycerol phosphate synthase from Desulfosudis oleivorans (strain DSM 6200 / JCM 39069 / Hxd3) (Desulfococcus oleovorans).